Here is a 139-residue protein sequence, read N- to C-terminus: Endoribonuclease YbeY (139 aa).

Zn(2+) is bound by residues histidine 107, histidine 111, and aspartate 117.

The protein belongs to the endoribonuclease YbeY family. It depends on Zn(2+) as a cofactor.

The protein localises to the cytoplasm. Single strand-specific metallo-endoribonuclease involved in late-stage 70S ribosome quality control and in maturation of the 3' terminus of the 16S rRNA. This chain is Endoribonuclease YbeY, found in Bacteroides fragilis (strain ATCC 25285 / DSM 2151 / CCUG 4856 / JCM 11019 / LMG 10263 / NCTC 9343 / Onslow / VPI 2553 / EN-2).